Consider the following 669-residue polypeptide: Potassium voltage-gated channel subfamily KQT member 1 (669 aa).

The Cytoplasmic segment spans residues 1–120 (MDTASSPPNA…YNFLERPTGW (120 aa)). At S27 the chain carries Phosphoserine; by PKA. Residues 121 to 142 (KCFVYHFTVFLIVLVCLIFSVL) traverse the membrane as a helical segment. Over 143–153 (STIEQYAALAT) the chain is Extracellular. The chain crosses the membrane as a helical span at residues 154 to 176 (GTLFWMEIVLVVFFGTEYVVRLW). At 177-192 (SAGCRSKYVGIWGRLR) the chain is on the cytoplasmic side. The helical transmembrane segment at 193-218 (FARKPISIIDLIVVVASMVVLCVGSK) threads the bilayer. The Extracellular segment spans residues 219 to 226 (GQVFATSA). The chain crosses the membrane as a helical; Voltage-sensor span at residues 227–242 (IRGIRFLQILRMLHVD). An interaction with KCNE3 region spans residues 238–246 (MLHVDRQGG). Topologically, residues 243–260 (RQGGTWRLLGSVVFIHRQ) are cytoplasmic. Q244 contacts a 1,2-diacyl-sn-glycero-3-phospho-(1D-myo-inositol-4,5-bisphosphate). Residues 261–283 (ELITTLYIGFLGLIFSSYFVYLA) traverse the membrane as a helical segment. Over 284-299 (EKDAVNESGRIEFGSY) the chain is Extracellular. N289 carries N-linked (GlcNAc...) asparagine glycosylation. Positions 300–320 (ADALWWGVVTVTTIGYGDKVP) form an intramembrane region, pore-forming. The Extracellular portion of the chain corresponds to 321-322 (QT). The chain crosses the membrane as a helical span at residues 323–348 (WVGKTIASCFSVFAISFFALPAGILG). The Cytoplasmic segment spans residues 349–669 (SGFALKVQQK…VPQTGPDEGS (321 aa)). The tract at residues 370–382 (AAASLIQTAWRCY) is interaction with CALM. 2 positions are modified to phosphoserine: S407 and S409. Residues 515–529 (KVIRRMQYFVAKKKF) form an interaction with CALM; calcium-dependent region. Residues 535 to 572 (PYDVRDVIEQYSQGHLNLMVRIKELQRRLDQSIGKPSL) form an interaction with KCNE1 C-terminus region. Residues 585–621 (SNTIGARLNRVEDKVTQLDQRLVIITDMLHQLLSLQQ) are a coiled coil. Residues 588-616 (IGARLNRVEDKVTQLDQRLVIITDMLHQL) form an interaction with AKAP9 region. The segment at 589–620 (GARLNRVEDKVTQLDQRLVIITDMLHQLLSLQ) is C-terminal assembly domain (tetramerization).

It belongs to the potassium channel family. KQT (TC 1.A.1.15) subfamily. Kv7.1/KCNQ1 sub-subfamily. In terms of assembly, tetramer. Heterotetramer with KCNE1; targets to the membrane raft. Interacts (via C-terminus) with CALM; forms a heterooctameric structure (with 4:4 KCNQ1:CALM stoichiometry) in a calcium-independent manner. Interacts with AKAP9; targets protein kinase A (PKA) catalytic and regulatory subunits and protein phosphatase 1 (PP1) to the KCNQ1-KCNE1 complex, allowing PKA-mediated phosphorylation and increase of delayed rectifier potassium channel activity. Interacts with KCNE2; form a heterooligomer complex that targets to the membrane raft and leading to currents with an apparently instantaneous activation, a rapid deactivation process and a linear current-voltage relationship and decreases the amplitude of the outward current. Interacts with AP2M1; mediates estrogen-induced internalization via clathrin-coated vesicles. Interacts with NEDD4L; promotes internalization and decreases I(Ks) currents. Interacts with USP2; counteracts the NEDD4L-specific down-regulation of I(Ks) and restore plasma membrane localization. Heterotetramer with KCNQ5; has a voltage-gated potassium channel activity. Interacts with KCNE3; produces a current with nearly instantaneous activation with a linear current-voltage relationship and alters membrane raft localization. Interacts with KCNE4; impairs KCNQ1 localization in lipid rafts and inhibits voltage-gated potassium channel activity. Interacts with KCNE5; impairs KCNQ1 localization in lipid rafts and only conducts current upon strong and continued depolarization. Interacts with SLC5A3; forms coregulatory channel-transporter complexes that modulate Na(+)-coupled myo-inositol influx through the transporter. Post-translationally, phosphorylation at Ser-27 by PKA; increases delayed rectifier potassium channel activity of the KCNQ1-KCNE1 complex through a macromolecular complex that includes PKA, PP1, and the targeting protein AKAP9. In terms of processing, ubiquitinated by NEDD4L; promotes internalization. The ubiquitinylated form is internalized through a clathrin-mediated endocytosis by interacting with AP2M1 and is recycled back to the cell membrane via RAB4A and RAB11A. Deubiquitinated by USP2; counteracts the NEDD4L-specific down-regulation of I(Ks) and restores the membrane localization.

Its subcellular location is the cell membrane. It localises to the cytoplasmic vesicle membrane. The protein resides in the early endosome. It is found in the membrane raft. The protein localises to the endoplasmic reticulum. Its subcellular location is the basolateral cell membrane. It localises to the apical cell membrane. It catalyses the reaction K(+)(in) = K(+)(out). PIP2 molecule is essential to activate KCNQ channels by inducing the coupling of the voltage-sensing domain (VSD) and the pore-forming domain (PD). Upon channel activation, PIP2 disrupts the VSD-calmodulin/CALM interactions, causing the release of CALM from the VSD which triggers the opening of the gate. Calcium potentiates KCNQ1 channel current through calcium-bound CALM. Calcium-bound CALM competes with PIP2 to stabilize the channel open state. Functionally, pore-forming subunit of the voltage-gated potassium (Kv) channel involved in the regulation of cardiomyocyte excitability and important in normal development and functions of myocardium, inner ear, stomach and colon. Associates with KCNE beta subunits that modulates current kinetics. Induces a voltage-dependent by rapidly activating and slowly deactivating potassium-selective outward current. Also promotes a delayed voltage activated potassium current showing outward rectification characteristic. During beta-adrenergic receptor stimulation participates in cardiac repolarization by associating with KCNE1 to form the I(Ks) cardiac potassium current that increases the amplitude and slows down the activation kinetics of outward potassium current I(Ks). Muscarinic agonist oxotremorine-M strongly suppresses KCNQ1/KCNE1 current. When associated with KCNE3, forms the potassium channel that is important for cyclic AMP-stimulated intestinal secretion of chloride ions. This interaction with KCNE3 is reduced by 17beta-estradiol, resulting in the reduction of currents. During conditions of increased substrate load, maintains the driving force for proximal tubular and intestinal sodium ions absorption, gastric acid secretion, and cAMP-induced jejunal chloride ions secretion. Allows the provision of potassium ions to the luminal membrane of the secretory canaliculus in the resting state as well as during stimulated acid secretion. When associated with KCNE2, forms a heterooligomer complex leading to currents with an apparently instantaneous activation, a rapid deactivation process and a linear current-voltage relationship and decreases the amplitude of the outward current. When associated with KCNE4, inhibits voltage-gated potassium channel activity. When associated with KCNE5, this complex only conducts current upon strong and continued depolarization. Also forms a heterotetramer with KCNQ5 that has a voltage-gated potassium channel activity. Binds with phosphatidylinositol 4,5-bisphosphate. KCNQ1-KCNE2 channel associates with Na(+)-coupled myo-inositol symporter in the apical membrane of choroid plexus epithelium and regulates the myo-inositol gradient between blood and cerebrospinal fluid with an impact on neuron excitability. This Rattus norvegicus (Rat) protein is Potassium voltage-gated channel subfamily KQT member 1.